The sequence spans 304 residues: Acetaldehyde dehydrogenase 4 (304 aa).

Cysteine 131 acts as the Acyl-thioester intermediate in catalysis. NAD(+) contacts are provided by residues 162–170 and asparagine 273; that span reads SAGPGTRKN.

It belongs to the acetaldehyde dehydrogenase family.

The enzyme catalyses acetaldehyde + NAD(+) + CoA = acetyl-CoA + NADH + H(+). The polypeptide is Acetaldehyde dehydrogenase 4 (Dechloromonas aromatica (strain RCB)).